Consider the following 492-residue polypeptide: Phenylalanine--tRNA ligase alpha subunit (492 aa).

L-phenylalanine-binding positions include T335, 374-376 (QLE), and Y414. E416 serves as a coordination point for Mg(2+). Residue F439 coordinates L-phenylalanine.

It belongs to the class-II aminoacyl-tRNA synthetase family. Phe-tRNA synthetase alpha subunit type 2 subfamily. As to quaternary structure, tetramer of two alpha and two beta subunits. The cofactor is Mg(2+).

The protein localises to the cytoplasm. The enzyme catalyses tRNA(Phe) + L-phenylalanine + ATP = L-phenylalanyl-tRNA(Phe) + AMP + diphosphate + H(+). The protein is Phenylalanine--tRNA ligase alpha subunit of Methanosarcina acetivorans (strain ATCC 35395 / DSM 2834 / JCM 12185 / C2A).